The following is an 89-amino-acid chain: UPF0298 protein GTNG_0961 (89 aa).

This sequence belongs to the UPF0298 family.

Its subcellular location is the cytoplasm. The chain is UPF0298 protein GTNG_0961 from Geobacillus thermodenitrificans (strain NG80-2).